Here is a 201-residue protein sequence, read N- to C-terminus: UPF0301 protein Mvan_6057 (201 aa).

This sequence belongs to the UPF0301 (AlgH) family.

The sequence is that of UPF0301 protein Mvan_6057 from Mycolicibacterium vanbaalenii (strain DSM 7251 / JCM 13017 / BCRC 16820 / KCTC 9966 / NRRL B-24157 / PYR-1) (Mycobacterium vanbaalenii).